Reading from the N-terminus, the 345-residue chain is Fructose-1,6-bisphosphatase class 1 2 (345 aa).

Residues glutamate 90, aspartate 109, leucine 111, and aspartate 112 each coordinate Mg(2+). Substrate-binding positions include 112–115 and asparagine 200; that span reads DGSS. Residue glutamate 272 participates in Mg(2+) binding.

This sequence belongs to the FBPase class 1 family. In terms of assembly, homotetramer. Mg(2+) serves as cofactor.

The protein resides in the cytoplasm. It catalyses the reaction beta-D-fructose 1,6-bisphosphate + H2O = beta-D-fructose 6-phosphate + phosphate. It participates in carbohydrate biosynthesis; gluconeogenesis. The polypeptide is Fructose-1,6-bisphosphatase class 1 2 (Nitrobacter hamburgensis (strain DSM 10229 / NCIMB 13809 / X14)).